The sequence spans 186 residues: Large ribosomal subunit protein eL15 (186 aa).

A disordered region spans residues 163 to 186 (RGLTSAGKKGRGLNKKGKGAEKVR). Residues 170–179 (KKGRGLNKKG) are compositionally biased toward basic residues.

The protein belongs to the eukaryotic ribosomal protein eL15 family.

In Methanosphaera stadtmanae (strain ATCC 43021 / DSM 3091 / JCM 11832 / MCB-3), this protein is Large ribosomal subunit protein eL15.